A 988-amino-acid polypeptide reads, in one-letter code: Exportin-T (988 aa).

It belongs to the exportin family.

It localises to the nucleus. It is found in the cytoplasm. In terms of biological role, tRNA nucleus export receptor which facilitates tRNA translocation across the nuclear pore complex. Involved in pre-tRNA splicing, probably by affecting the interaction of pre-tRNA with splicing endonuclease. This chain is Exportin-T (LOS1), found in Lodderomyces elongisporus (strain ATCC 11503 / CBS 2605 / JCM 1781 / NBRC 1676 / NRRL YB-4239) (Yeast).